Reading from the N-terminus, the 268-residue chain is MFTDTINKCAANAARIARLSANNPLGFWVSSAMAGAYVGLGIILIFTLGNLLDPSVRPLVMGATFGIALTLVIIAGSELFTGHTMFLTFGVKAGSISHGQMWAILPQTWLGNLVGSVFVAMLYSWGGGSLLPVDTSIVHSVALAKTTAPAMVLFFKGALCNWLVCLAIWMALRTEGAAKFIAIWWCLLAFIASGYEHSIANMTLFALSWFGNHSEAYTLAGIGHNLLWVTLGNTLSGAVFMGLGYWYATPKANRPVADKFNQTETAAG.

At 1–25 (MFTDTINKCAANAARIARLSANNPL) the chain is on the cytoplasmic side. Residues 26–46 (GFWVSSAMAGAYVGLGIILIF) traverse the membrane as a helical segment. Over 47 to 59 (TLGNLLDPSVRPL) the chain is Periplasmic. Residues 60 to 80 (VMGATFGIALTLVIIAGSELF) form a helical membrane-spanning segment. The Cytoplasmic portion of the chain corresponds to 81–112 (TGHTMFLTFGVKAGSISHGQMWAILPQTWLGN). A helical membrane pass occupies residues 113-133 (LVGSVFVAMLYSWGGGSLLPV). Over 134-151 (DTSIVHSVALAKTTAPAM) the chain is Periplasmic. A helical transmembrane segment spans residues 152–172 (VLFFKGALCNWLVCLAIWMAL). Topologically, residues 173–179 (RTEGAAK) are cytoplasmic. A helical membrane pass occupies residues 180-200 (FIAIWWCLLAFIASGYEHSIA). Topologically, residues 201-225 (NMTLFALSWFGNHSEAYTLAGIGHN) are periplasmic. Residues 226 to 246 (LLWVTLGNTLSGAVFMGLGYW) form a helical membrane-spanning segment. Residues 247–268 (YATPKANRPVADKFNQTETAAG) lie on the Cytoplasmic side of the membrane.

It belongs to the FNT transporter (TC 1.A.16) family.

It is found in the cell inner membrane. Its function is as follows. Catalyzes nitrite uptake and nitrite export across the cytoplasmic membrane. Is up to 10-fold more active than NarK or NarU in nitrite uptake for subsequent reduction in the cytoplasm by the NirB/NirD nitrite reductase. The polypeptide is Nitrite transporter NirC (nirC) (Escherichia coli (strain K12)).